The sequence spans 559 residues: Peptidyl-prolyl isomerase cwc27 (559 aa).

The PPIase cyclophilin-type domain maps to 11–184 (PTASATLHTT…YPVKVVSCEV (174 aa)). Disordered regions lie at residues 201–395 (ATAP…GFSS), 413–449 (ESAD…EDEE), and 518–559 (PRER…REKP). Residues 261–273 (APKKTSPEAEQQT) show a composition bias toward basic and acidic residues. Residues 305–319 (LPDPESPARSPPQSP) are compositionally biased toward pro residues. Composition is skewed to polar residues over residues 384–394 (GSSTNGVTGFS) and 425–442 (TSIS…AKSN).

This sequence belongs to the cyclophilin-type PPIase family. CWC27 subfamily. As to quaternary structure, associated with the spliceosome.

It is found in the cytoplasm. Its subcellular location is the nucleus. It catalyses the reaction [protein]-peptidylproline (omega=180) = [protein]-peptidylproline (omega=0). Its function is as follows. PPIases accelerate the folding of proteins. It catalyzes the cis-trans isomerization of proline imidic peptide bonds in oligopeptides. Involved in pre-mRNA splicing. This Aspergillus fumigatus (strain ATCC MYA-4609 / CBS 101355 / FGSC A1100 / Af293) (Neosartorya fumigata) protein is Peptidyl-prolyl isomerase cwc27 (cwc27).